A 122-amino-acid chain; its full sequence is MIQTQTMLEVADNSGARQVMCIKVLGGSHRRYATVGDIIKVTVKEAIPRGKVKKGQVLKAVVVRTRKGVRRPDGSLIRFDGNAAVLLNNQDAPIGTRIFGPVTRELRNEKFMKIISLAPEVL.

Belongs to the universal ribosomal protein uL14 family. As to quaternary structure, part of the 50S ribosomal subunit. Forms a cluster with proteins L3 and L19. In the 70S ribosome, L14 and L19 interact and together make contacts with the 16S rRNA in bridges B5 and B8.

In terms of biological role, binds to 23S rRNA. Forms part of two intersubunit bridges in the 70S ribosome. The sequence is that of Large ribosomal subunit protein uL14 from Marinobacter nauticus (strain ATCC 700491 / DSM 11845 / VT8) (Marinobacter aquaeolei).